A 503-amino-acid chain; its full sequence is Probable cytosol aminopeptidase (503 aa).

2 residues coordinate Mn(2+): K270 and D275. K282 is a catalytic residue. Positions 293, 352, and 354 each coordinate Mn(2+). R356 is a catalytic residue.

The protein belongs to the peptidase M17 family. Mn(2+) is required as a cofactor.

The protein localises to the cytoplasm. The catalysed reaction is Release of an N-terminal amino acid, Xaa-|-Yaa-, in which Xaa is preferably Leu, but may be other amino acids including Pro although not Arg or Lys, and Yaa may be Pro. Amino acid amides and methyl esters are also readily hydrolyzed, but rates on arylamides are exceedingly low.. It carries out the reaction Release of an N-terminal amino acid, preferentially leucine, but not glutamic or aspartic acids.. Presumably involved in the processing and regular turnover of intracellular proteins. Catalyzes the removal of unsubstituted N-terminal amino acids from various peptides. This chain is Probable cytosol aminopeptidase, found in Serratia proteamaculans (strain 568).